The primary structure comprises 311 residues: m7GpppX diphosphatase (311 aa).

Substrate is bound by residues E159, K181, and 242–253 (HYQPSFYHLHVH). A Histidine triad motif motif is present at residues 249–253 (HLHVH). The active-site Nucleophile is H251.

Belongs to the HIT family. Expressed in neurons in the ventral cord, the nerve ring and the pharynx.

It localises to the nucleus. It carries out the reaction a 5'-end (N(7)-methyl 5'-triphosphoguanosine)-ribonucleoside in mRNA + H2O = N(7)-methyl-GMP + a 5'-end diphospho-ribonucleoside in mRNA + 2 H(+). It catalyses the reaction a 5'-end (N(2),N(2),N(7)-trimethyl 5'-triphosphoguanosine)-ribonucleoside in mRNA + H2O = (N(2),N(2),N(7))-trimethyl-GMP + a 5'-end diphospho-ribonucleoside in mRNA + 2 H(+). Its activity is regulated as follows. The hydrolytic product 7-methylguanosine diphosphate (m7GDP) efficiently inhibits the decapping scavenger activity and acts as a competitive inhibitor in vitro. Functionally, decapping scavenger enzyme that catalyzes the cleavage of a residual cap structure following the degradation of mRNAs of the 3'-&gt;5' exosome-mediated mRNA decay pathway. Hydrolyzes cap analog structures like 7-methylguanosine nucleoside triphosphate (m7GpppG) and tri-methyl guanosine nucleoside triphosphate (m3(2,2,7)GpppG) with up to 2 nucleotide substrates (small capped oligoribonucleotides) and specifically releases 5'-phosphorylated RNA fragments and 7-methylguanosine monophosphate (m7GMP). Does not hydrolyze unmethylated cap analog (GpppG) and shows no decapping activity on intact m7GpppG-capped mRNA molecules. Does not hydrolyze 7-methylguanosine diphosphate (m7GDP) and tri-methylguanosine diphosphate (m3(2,2,7)GDP) to m(7)GMP and m3(2,2,7)GMP, respectively. May also play a role in the 5'-&gt;3 mRNA decay pathway; m7GDP, the downstream product released by the 5'-&gt;3' mRNA mediated decapping activity, may be also converted by dcs-1 to m7GMP. Binds to m7GpppG and strongly to m7GDP. This Caenorhabditis elegans protein is m7GpppX diphosphatase (dcs-1).